Here is a 316-residue protein sequence, read N- to C-terminus: Vacuolar morphogenesis protein 7 (316 aa).

A PX domain is found at 1–124 (MAANSVGKMS…QDFLQLSKPN (124 aa)). Positions 168-186 (RARTKLHKLRERLEQDVQK) form a coiled coil. In terms of domain architecture, t-SNARE coiled-coil homology spans 250-312 (MQMVRDQEQE…QIANKKARHF (63 aa)).

As to quaternary structure, possibly multimeric. Associates with VAM3.

It is found in the vacuole. Functionally, essential for proper morphogenesis of the vacuole. May exist as structural reinforcement on the surface of the vacuolar membrane and be required for maintenance against rupture by osmotic pressure. In Saccharomyces cerevisiae (strain ATCC 204508 / S288c) (Baker's yeast), this protein is Vacuolar morphogenesis protein 7 (VAM7).